We begin with the raw amino-acid sequence, 223 residues long: Ribosome maturation factor RimM (223 aa).

Residues 1 to 12 show a composition bias toward low complexity; sequence MARRPGSSSRGP. Disordered regions lie at residues 1 to 44 and 203 to 223; these read MARR…DPGL and VADP…DDPG. In terms of domain architecture, PRC barrel spans 135-210; that stretch reads DEDEFFLTDL…KVVADPPDDL (76 aa).

This sequence belongs to the RimM family. As to quaternary structure, binds ribosomal protein uS19.

The protein resides in the cytoplasm. An accessory protein needed during the final step in the assembly of 30S ribosomal subunit, possibly for assembly of the head region. Essential for efficient processing of 16S rRNA. May be needed both before and after RbfA during the maturation of 16S rRNA. It has affinity for free ribosomal 30S subunits but not for 70S ribosomes. In Methylorubrum extorquens (strain CM4 / NCIMB 13688) (Methylobacterium extorquens), this protein is Ribosome maturation factor RimM.